Reading from the N-terminus, the 270-residue chain is MEYIKKIALYMSVLLLIIFIGGCGNMKDEQKKEEQTNKTDSKEEQIKKSFAKTLDMYPIKNLEDLYDKEGYRDGEFKKGDKGTWTILTGFSKSNKPGVLDDEGMVLYLNRNTKKATGYYFVNKVYDDISKNHNEKKYRVELKNNKIVLLDNVEDKKLKQKIENFKFFSQYADFKDLKNYQDGNITTNENVPSYEAQYKMNNSDKNVKKLREIYPITTNNSPNLKLYIDGDIKGSSVGYKKIEYKFSKDKGQETTLRDYLNFGPSEGENVE.

Positions 1–22 are cleaved as a signal peptide; it reads MEYIKKIALYMSVLLLIIFIGG. Cysteine 23 is lipidated: N-palmitoyl cysteine. A lipid anchor (S-diacylglycerol cysteine) is attached at cysteine 23.

This sequence belongs to the staphylococcal tandem lipoprotein family.

The protein resides in the cell membrane. This is an uncharacterized protein from Staphylococcus aureus (strain NCTC 8325 / PS 47).